Here is a 348-residue protein sequence, read N- to C-terminus: D-alanine--D-alanine ligase (348 aa).

The ATP-grasp domain maps to 132–334 (KRVLESIGIP…YPDLIEELVT (203 aa)). Residue 162–217 (LARLTFPIFVKPANMGSSVGISKAQTKVELRKAIQLALTYDSRVLIEQGVVAREIE) participates in ATP binding. Residues Asp-288, Glu-301, and Asn-303 each contribute to the Mg(2+) site.

Belongs to the D-alanine--D-alanine ligase family. It depends on Mg(2+) as a cofactor. Mn(2+) is required as a cofactor.

It is found in the cytoplasm. The catalysed reaction is 2 D-alanine + ATP = D-alanyl-D-alanine + ADP + phosphate + H(+). It participates in cell wall biogenesis; peptidoglycan biosynthesis. Cell wall formation. In Streptococcus pyogenes serotype M3 (strain SSI-1), this protein is D-alanine--D-alanine ligase.